A 73-amino-acid polypeptide reads, in one-letter code: uncharacterized protein (73 aa).

Residues 1 to 28 form the signal peptide; that stretch reads MKFLLSVIAGLLILALYLFWKVQPPVWI.

This is an uncharacterized protein from Bacillus subtilis (strain 168).